We begin with the raw amino-acid sequence, 280 residues long: Phosphatidylglycerol--prolipoprotein diacylglyceryl transferase (280 aa).

The next 2 helical transmembrane spans lie at 59–79 (FLTWATLGVVLGGRLGYILFY) and 97–117 (GGMSFHGGALGVIVALALFTW). Position 142 (arginine 142) interacts with a 1,2-diacyl-sn-glycero-3-phospho-(1'-sn-glycerol). 2 helical membrane-spanning segments follow: residues 207–227 (GFLAGLFLFGYAVARSICECF) and 233–253 (FIGFLPFGTTMGQILCIPMAI).

Belongs to the Lgt family.

The protein localises to the cell inner membrane. It catalyses the reaction L-cysteinyl-[prolipoprotein] + a 1,2-diacyl-sn-glycero-3-phospho-(1'-sn-glycerol) = an S-1,2-diacyl-sn-glyceryl-L-cysteinyl-[prolipoprotein] + sn-glycerol 1-phosphate + H(+). The protein operates within protein modification; lipoprotein biosynthesis (diacylglyceryl transfer). Catalyzes the transfer of the diacylglyceryl group from phosphatidylglycerol to the sulfhydryl group of the N-terminal cysteine of a prolipoprotein, the first step in the formation of mature lipoproteins. This is Phosphatidylglycerol--prolipoprotein diacylglyceryl transferase from Gluconacetobacter diazotrophicus (strain ATCC 49037 / DSM 5601 / CCUG 37298 / CIP 103539 / LMG 7603 / PAl5).